A 677-amino-acid polypeptide reads, in one-letter code: Methionine--tRNA ligase (677 aa).

The short motif at 15–25 (PYANGSIHLGH) is the 'HIGH' region element. Positions 146, 149, 159, and 162 each coordinate Zn(2+). The short motif at 333–337 (KMSKS) is the 'KMSKS' region element. Lys336 is a binding site for ATP. In terms of domain architecture, tRNA-binding spans 575 to 677 (DFAKVDLRVA…AGAKPGHQVK (103 aa)).

Belongs to the class-I aminoacyl-tRNA synthetase family. MetG type 1 subfamily. As to quaternary structure, homodimer. Zn(2+) is required as a cofactor.

It is found in the cytoplasm. The enzyme catalyses tRNA(Met) + L-methionine + ATP = L-methionyl-tRNA(Met) + AMP + diphosphate. Is required not only for elongation of protein synthesis but also for the initiation of all mRNA translation through initiator tRNA(fMet) aminoacylation. This is Methionine--tRNA ligase from Escherichia coli O157:H7.